A 388-amino-acid polypeptide reads, in one-letter code: 1-deoxy-D-xylulose 5-phosphate reductoisomerase (388 aa).

NADPH-binding residues include T15, G16, S17, I18, and N127. Residue K128 participates in 1-deoxy-D-xylulose 5-phosphate binding. E129 is a binding site for NADPH. D153 provides a ligand contact to Mn(2+). Positions 154, 155, 179, and 202 each coordinate 1-deoxy-D-xylulose 5-phosphate. Residue E155 participates in Mn(2+) binding. G208 is a binding site for NADPH. The 1-deoxy-D-xylulose 5-phosphate site is built by S215, N220, K221, and E224. E224 contacts Mn(2+).

The protein belongs to the DXR family. It depends on Mg(2+) as a cofactor. Mn(2+) serves as cofactor.

The enzyme catalyses 2-C-methyl-D-erythritol 4-phosphate + NADP(+) = 1-deoxy-D-xylulose 5-phosphate + NADPH + H(+). It functions in the pathway isoprenoid biosynthesis; isopentenyl diphosphate biosynthesis via DXP pathway; isopentenyl diphosphate from 1-deoxy-D-xylulose 5-phosphate: step 1/6. In terms of biological role, catalyzes the NADPH-dependent rearrangement and reduction of 1-deoxy-D-xylulose-5-phosphate (DXP) to 2-C-methyl-D-erythritol 4-phosphate (MEP). The chain is 1-deoxy-D-xylulose 5-phosphate reductoisomerase from Bacteroides fragilis (strain YCH46).